Reading from the N-terminus, the 94-residue chain is Co-chaperonin GroES (94 aa).

The protein belongs to the GroES chaperonin family. As to quaternary structure, heptamer of 7 subunits arranged in a ring. Interacts with the chaperonin GroEL.

The protein localises to the cytoplasm. Functionally, together with the chaperonin GroEL, plays an essential role in assisting protein folding. The GroEL-GroES system forms a nano-cage that allows encapsulation of the non-native substrate proteins and provides a physical environment optimized to promote and accelerate protein folding. GroES binds to the apical surface of the GroEL ring, thereby capping the opening of the GroEL channel. The sequence is that of Co-chaperonin GroES from Bacillus pumilus (strain SAFR-032).